The primary structure comprises 774 residues: MDDWKSRLVIKSMLPHFAMVGNRQEPRKLQESGKKPSWMEEEDLSFLYKSSPGRKHQGTVKRRQEEDHFQFPDMADGGYPNKIKRPCLEDVTLAMGPGAHPSTACAELQVPPLTINPSPAAMGVAGQSLLLENNPMNGNIMGSPFVVPQTTEVGLKGPTVPYYEKINSVPAVDQELQELLEELTKIQDPSPNELDLEKILGTKPEEPLVLDHPQATLSTTPKPSVQMSHLESLASSKEFASSCSQVTGMSLQIPSSSTGISYSIPSTSKQIVSPSSSMAQSKSQVQAMLPVALPPLPVPQWHHAHQLKALAASKQGSATKQQGPTPSWSGLPPPGLSPPYRPVPSPHPPPLPLPPPPPPFSPQSLMVSCMSSNTLSGSTLRGSPNALLSSMTSSSNAALGPAMPYAPEKLPSPALTQQPQFGPQSSILANLMSSTIKTPQGHLMSALPASNPGPSPPYRPEKLSSPGLPQQSFTPQCSLIRSLTPTSNLLSQQQQQQQQQQQANVIFKPISSNSSKTLSMIMQQGMASSSPGATEPFTFGNTKPLSHFVSEPGPQKMPSMPTTSRQPSLLHYLQQPTPTQASSATASSTATATLQLQQQQQQQQQQPDHSSFLLQQMMQQPQRFQRSVASDSMPALPRQGCCHLFAWTSAASSVKPQHQHGNSFTSRQDPQPGDVSPSNITHVDKACKLGEARHPQVSLGRQPPSCQALGSESFLPGSSFAHELARVTSSYSTSEAAPWGSWDPKAWRQVPAPLLPSCDATARGTEIRSYGNDP.

7 disordered regions span residues 257–279 (STGI…SSMA), 310–365 (LAAS…PQSL), 386–421 (ALLS…QPQF), 442–473 (HLMS…QQSF), 525–609 (GMAS…QPDH), 656–678 (PQHQ…VSPS), and 755–774 (LPSC…GNDP). Pro residues predominate over residues 331 to 361 (LPPPGLSPPYRPVPSPHPPPLPLPPPPPPFS). The segment covering 386 to 397 (ALLSSMTSSSNA) has biased composition (polar residues). Residues 574 to 609 (QQPTPTQASSATASSTATATLQLQQQQQQQQQQPDH) are compositionally biased toward low complexity. Residues 656–669 (PQHQHGNSFTSRQD) are compositionally biased toward polar residues. S676 bears the Phosphoserine mark.

It belongs to the mastermind family. In terms of tissue distribution, expressed in fetal brain, fetal ovary and fetal testis. Expressed in adult brain, ovary, skin, testis, uterus. Highly expressed in skeletal muscle.

It is found in the nucleus. Functionally, transactivates the HES3 promoter independently of NOTCH proteins. HES3 is a non-canonical NOTCH target gene which lacks binding sites for RBPJ. The sequence is that of Mastermind-like domain-containing protein 1 (MAMLD1) from Homo sapiens (Human).